Reading from the N-terminus, the 29-residue chain is Cytochrome b6-f complex subunit 8 (29 aa).

The helical transmembrane segment at 3–23 (ILTLGWVSILALFTWSIAMVV) threads the bilayer.

This sequence belongs to the PetN family. In terms of assembly, the 4 large subunits of the cytochrome b6-f complex are cytochrome b6, subunit IV (17 kDa polypeptide, PetD), cytochrome f and the Rieske protein, while the 4 small subunits are PetG, PetL, PetM and PetN. The complex functions as a dimer.

Its subcellular location is the cellular thylakoid membrane. Its function is as follows. Component of the cytochrome b6-f complex, which mediates electron transfer between photosystem II (PSII) and photosystem I (PSI), cyclic electron flow around PSI, and state transitions. The sequence is that of Cytochrome b6-f complex subunit 8 from Microcystis aeruginosa (strain NIES-843 / IAM M-2473).